An 848-amino-acid polypeptide reads, in one-letter code: Heat shock protein 70 homolog lhs1 (848 aa).

An N-terminal signal peptide occupies residues 1 to 21 (MKRSVLTIILFFSCQFWHAFA). N-linked (GlcNAc...) asparagine glycans are attached at residues Asn-134, Asn-247, Asn-359, Asn-457, Asn-462, Asn-488, Asn-555, Asn-632, Asn-678, Asn-733, and Asn-817. The disordered stretch occupies residues 784–848 (KLKAKKGASS…QQEIDDSDEL (65 aa)). Composition is skewed to polar residues over residues 807–822 (TNDIEPTTALNSTSTQ) and 829–840 (ASVTQRPSSLQQ). The short motif at 845-848 (SDEL) is the Prevents secretion from ER element.

It belongs to the heat shock protein 70 family.

The protein localises to the endoplasmic reticulum lumen. The catalysed reaction is ATP + H2O = ADP + phosphate + H(+). Its function is as follows. Chaperone required for protein translocation and folding in the endoplasmic reticulum. The sequence is that of Heat shock protein 70 homolog lhs1 from Schizosaccharomyces pombe (strain 972 / ATCC 24843) (Fission yeast).